Here is a 396-residue protein sequence, read N- to C-terminus: uncharacterized protein (396 aa).

Residues cysteine 8, cysteine 14, cysteine 17, and cysteine 95 each contribute to the [4Fe-4S] cluster site. The S-adenosyl-L-methionine site is built by glutamine 229, tyrosine 258, glutamate 279, and aspartate 325. Cysteine 352 (nucleophile) is an active-site residue.

This sequence belongs to the class I-like SAM-binding methyltransferase superfamily. RNA M5U methyltransferase family.

This is an uncharacterized protein from Chlamydia trachomatis serovar D (strain ATCC VR-885 / DSM 19411 / UW-3/Cx).